Here is a 192-residue protein sequence, read N- to C-terminus: Ion-translocating oxidoreductase complex subunit B (192 aa).

The hydrophobic stretch occupies residues 1 to 26; that stretch reads MNAIWIAVAAVSLLGLAFGAILGYAS. In terms of domain architecture, 4Fe-4S spans 32 to 91; that stretch reads EDDPVVEKIDEILPQSQCGQCGYPGCRPYAETISCNGEKINRCAPGGEAVMLKIAELLNV. Residues cysteine 49, cysteine 52, cysteine 57, cysteine 74, cysteine 117, cysteine 120, cysteine 123, cysteine 127, cysteine 147, cysteine 150, cysteine 153, and cysteine 157 each contribute to the [4Fe-4S] cluster site. 4Fe-4S ferredoxin-type domains lie at 108-137 and 138-167; these read MVAV…GATR and AMHT…LQPV.

The protein belongs to the 4Fe4S bacterial-type ferredoxin family. RnfB subfamily. The complex is composed of six subunits: RsxA, RsxB, RsxC, RsxD, RsxE and RsxG. Requires [4Fe-4S] cluster as cofactor.

It localises to the cell inner membrane. Its function is as follows. Part of a membrane-bound complex that couples electron transfer with translocation of ions across the membrane. Required to maintain the reduced state of SoxR. The polypeptide is Ion-translocating oxidoreductase complex subunit B (Escherichia coli O6:K15:H31 (strain 536 / UPEC)).